Consider the following 160-residue polypeptide: Endoribonuclease YbeY (160 aa).

Residues histidine 125, histidine 129, and histidine 135 each contribute to the Zn(2+) site.

Belongs to the endoribonuclease YbeY family. Zn(2+) serves as cofactor.

It localises to the cytoplasm. Single strand-specific metallo-endoribonuclease involved in late-stage 70S ribosome quality control and in maturation of the 3' terminus of the 16S rRNA. The protein is Endoribonuclease YbeY of Leuconostoc citreum (strain KM20).